A 221-amino-acid polypeptide reads, in one-letter code: Histone H1-like protein HC2 (221 aa).

Composition is skewed to basic residues over residues 1-50 (MLGV…KTVA) and 59-70 (PVAKKATAKKAP). Residues 1 to 70 (MLGVQKKRST…AKKATAKKAP (70 aa)) are disordered.

It belongs to the histone H1/H5 family. HCT subfamily.

Might have a role in establishing the nucleoid structure of elementary bodies. This chain is Histone H1-like protein HC2 (hctB), found in Chlamydia trachomatis serovar L2 (strain ATCC VR-902B / DSM 19102 / 434/Bu).